We begin with the raw amino-acid sequence, 228 residues long: Lipoprotein-releasing system ATP-binding protein LolD (228 aa).

Positions 7–228 constitute an ABC transporter domain; that stretch reads LNCQNLTKDY…MQDGVLRPEM (222 aa). 43-50 contacts ATP; the sequence is GSSGSGKS.

Belongs to the ABC transporter superfamily. Lipoprotein translocase (TC 3.A.1.125) family. As to quaternary structure, the complex is composed of two ATP-binding proteins (LolD) and two transmembrane proteins (LolC and LolE).

It localises to the cell inner membrane. Functionally, part of the ABC transporter complex LolCDE involved in the translocation of mature outer membrane-directed lipoproteins, from the inner membrane to the periplasmic chaperone, LolA. Responsible for the formation of the LolA-lipoprotein complex in an ATP-dependent manner. This is Lipoprotein-releasing system ATP-binding protein LolD from Mannheimia succiniciproducens (strain KCTC 0769BP / MBEL55E).